A 120-amino-acid polypeptide reads, in one-letter code: Large ribosomal subunit protein uL18 (120 aa).

Belongs to the universal ribosomal protein uL18 family. As to quaternary structure, part of the 50S ribosomal subunit; part of the 5S rRNA/L5/L18/L25 subcomplex. Contacts the 5S and 23S rRNAs.

This is one of the proteins that bind and probably mediate the attachment of the 5S RNA into the large ribosomal subunit, where it forms part of the central protuberance. The chain is Large ribosomal subunit protein uL18 from Chloroherpeton thalassium (strain ATCC 35110 / GB-78).